The primary structure comprises 351 residues: N-acetyl-gamma-glutamyl-phosphate reductase (351 aa).

Cys-154 is a catalytic residue.

It belongs to the NAGSA dehydrogenase family. Type 1 subfamily.

It is found in the cytoplasm. It catalyses the reaction N-acetyl-L-glutamate 5-semialdehyde + phosphate + NADP(+) = N-acetyl-L-glutamyl 5-phosphate + NADPH + H(+). It participates in amino-acid biosynthesis; L-arginine biosynthesis; N(2)-acetyl-L-ornithine from L-glutamate: step 3/4. In terms of biological role, catalyzes the NADPH-dependent reduction of N-acetyl-5-glutamyl phosphate to yield N-acetyl-L-glutamate 5-semialdehyde. The sequence is that of N-acetyl-gamma-glutamyl-phosphate reductase from Synechocystis sp. (strain ATCC 27184 / PCC 6803 / Kazusa).